Consider the following 607-residue polypeptide: Aspartate--tRNA(Asp/Asn) ligase (607 aa).

Glutamate 173 lines the L-aspartate pocket. Positions 197–200 (QLFK) are aspartate. Arginine 219 contributes to the L-aspartate binding site. ATP contacts are provided by residues 219–221 (RDE) and glutamine 228. Residue histidine 456 participates in L-aspartate binding. ATP is bound at residue glutamate 498. An L-aspartate-binding site is contributed by arginine 505. 550 to 553 (GLDR) provides a ligand contact to ATP.

Belongs to the class-II aminoacyl-tRNA synthetase family. Type 1 subfamily. Homodimer.

The protein localises to the cytoplasm. It carries out the reaction tRNA(Asx) + L-aspartate + ATP = L-aspartyl-tRNA(Asx) + AMP + diphosphate. Functionally, aspartyl-tRNA synthetase with relaxed tRNA specificity since it is able to aspartylate not only its cognate tRNA(Asp) but also tRNA(Asn). Reaction proceeds in two steps: L-aspartate is first activated by ATP to form Asp-AMP and then transferred to the acceptor end of tRNA(Asp/Asn). The polypeptide is Aspartate--tRNA(Asp/Asn) ligase (Magnetococcus marinus (strain ATCC BAA-1437 / JCM 17883 / MC-1)).